The chain runs to 81 residues: Elicitor peptide 4 (81 aa).

A propeptide spanning residues Met1 to Arg54 is cleaved from the precursor. The tract at residues Pro57–Phe81 is disordered.

This sequence belongs to the brassicaceae elicitor peptide family.

In terms of biological role, elicitor of plant defense. The protein is Elicitor peptide 4 (PEP4) of Arabidopsis thaliana (Mouse-ear cress).